A 261-amino-acid polypeptide reads, in one-letter code: CD40 ligand (261 aa).

Topologically, residues 1–22 are cytoplasmic; it reads MVETYHQPAPRSAATGLPVSMK. A helical; Signal-anchor for type II membrane protein membrane pass occupies residues 23-43; the sequence is IFMYLLTVFLITQMIGSALFA. The Extracellular portion of the chain corresponds to 44–261; it reads VYLHRRLDKI…GFTSFGLLKL (218 aa). Positions 122 to 261 constitute a THD domain; the sequence is IAAHVISEAS…GFTSFGLLKL (140 aa). Cys178 and Cys218 form a disulfide bridge. Asn240 carries an N-linked (GlcNAc...) asparagine glycan.

The protein belongs to the tumor necrosis factor family. As to quaternary structure, homotrimer. Interacts with CD28. CD40 ligand, soluble form: Exists as either a monomer or a homotrimer. Forms a ternary complex between CD40 and integrins for CD40-CD40LG signaling. The soluble form derives from the membrane form by proteolytic processing.

It is found in the cell membrane. The protein localises to the cell surface. The protein resides in the secreted. In terms of biological role, cytokine that acts as a ligand to CD40/TNFRSF5. Costimulates T-cell proliferation and cytokine production. Its cross-linking on T-cells generates a costimulatory signal which enhances the production of IL4 and IL10 in conjunction with the TCR/CD3 ligation and CD28 costimulation. Induces the activation of NF-kappa-B. Induces the activation of kinases MAPK8 and PAK2 in T-cells. Mediates B-cell proliferation in the absence of co-stimulus as well as IgE production in the presence of IL4. Involved in immunoglobulin class switching. Its function is as follows. Acts as a ligand for integrins, specifically ITGA5:ITGB1 and ITGAV:ITGB3; both integrins and the CD40 receptor are required for activation of CD40-CD40LG signaling, which have cell-type dependent effects, such as B-cell activation, NF-kappa-B signaling and anti-apoptotic signaling. This chain is CD40 ligand (CD40LG), found in Aotus trivirgatus (Three-striped night monkey).